Consider the following 183-residue polypeptide: Capsid protein (183 aa).

Residues 136–183 (NAPILSTLPETTVVRRRGRSPRRRTPSPRRRRSQSPRRRRSQSPASQC) form a disordered region. The segment covering 149–176 (VRRRGRSPRRRTPSPRRRRSQSPRRRRS) has biased composition (basic residues). Phosphoserine; by host is present on residues Ser155, Ser162, and Ser170. The stretch at 155–161 (SPRRRTP) is one 1; half-length repeat. The 3 X 8 AA repeats of S-P-R-R-R-[PR]-S-Q stretch occupies residues 155–177 (SPRRRTPSPRRRRSQSPRRRRSQ). Positions 158–175 (RRTPSPRRRRSQSPRRRR) match the Bipartite nuclear localization signal motif. Repeat copies occupy residues 162 to 169 (SPRRRRSQ) and 170 to 177 (SPRRRRSQ). Residues 177-183 (QSPASQC) are RNA binding.

This sequence belongs to the orthohepadnavirus core antigen family. In terms of assembly, homodimerizes, then multimerizes. Interacts with cytosol exposed regions of viral L glycoprotein present in the reticulum-to-Golgi compartment. Interacts with human FLNB. Phosphorylated form interacts with host importin alpha; this interaction depends on the exposure of the NLS, which itself depends upon genome maturation and/or phosphorylation of the capsid protein. Interacts with host NUP153. Phosphorylated by host SRPK1, SRPK2, and maybe protein kinase C or GAPDH. Phosphorylation is critical for pregenomic RNA packaging. Protein kinase C phosphorylation is stimulated by HBx protein and may play a role in transport of the viral genome to the nucleus at the late step during the viral replication cycle.

It localises to the virion. The protein resides in the host cytoplasm. Functionally, self assembles to form an icosahedral capsid. Most capsids appear to be large particles with an icosahedral symmetry of T=4 and consist of 240 copies of capsid protein, though a fraction forms smaller T=3 particles consisting of 180 capsid proteins. Entering capsids are transported along microtubules to the nucleus. Phosphorylation of the capsid is thought to induce exposure of nuclear localization signal in the C-terminal portion of the capsid protein that allows binding to the nuclear pore complex via the importin (karyopherin-) alpha and beta. Capsids are imported in intact form through the nuclear pore into the nuclear basket, where it probably binds NUP153. Only capsids that contain the mature viral genome can release the viral DNA and capsid protein into the nucleoplasm. Immature capsids get stuck in the basket. Capsids encapsulate the pre-genomic RNA and the P protein. Pre-genomic RNA is reverse-transcribed into DNA while the capsid is still in the cytoplasm. The capsid can then either be directed to the nucleus, providing more genomes for transcription, or bud through the endoplasmic reticulum to provide new virions. The protein is Capsid protein of Hepatitis B virus genotype F2 (isolate Brazil/w4B) (HBV-F).